The following is a 404-amino-acid chain: LL-diaminopimelate aminotransferase (404 aa).

Positions 15 and 42 each coordinate substrate. Residues Y72, 108 to 109, Y132, N188, Y219, and 247 to 249 each bind pyridoxal 5'-phosphate; these read AK and SFS. Substrate is bound by residues K109, Y132, and N188. K250 carries the N6-(pyridoxal phosphate)lysine modification. The pyridoxal 5'-phosphate site is built by R258 and N288. Substrate is bound by residues N288 and R384.

The protein belongs to the class-I pyridoxal-phosphate-dependent aminotransferase family. LL-diaminopimelate aminotransferase subfamily. In terms of assembly, homodimer. It depends on pyridoxal 5'-phosphate as a cofactor.

It catalyses the reaction (2S,6S)-2,6-diaminopimelate + 2-oxoglutarate = (S)-2,3,4,5-tetrahydrodipicolinate + L-glutamate + H2O + H(+). The protein operates within amino-acid biosynthesis; L-lysine biosynthesis via DAP pathway; LL-2,6-diaminopimelate from (S)-tetrahydrodipicolinate (aminotransferase route): step 1/1. Involved in the synthesis of meso-diaminopimelate (m-DAP or DL-DAP), required for both lysine and peptidoglycan biosynthesis. Catalyzes the direct conversion of tetrahydrodipicolinate to LL-diaminopimelate. The chain is LL-diaminopimelate aminotransferase from Lachnoclostridium phytofermentans (strain ATCC 700394 / DSM 18823 / ISDg) (Clostridium phytofermentans).